An 852-amino-acid chain; its full sequence is Eukaryotic translation initiation factor 3 subunit C (852 aa).

The tract at residues 1–90 is disordered; sequence MSRFFVSGYP…DSDSDDEGRK (90 aa). Acidic residues predominate over residues 14–57; sequence SSEEEDLLSSSEEELLSSESEEDNFSSDSEFGNDSDNDSSDSDS. The region spanning 597–772 is the PCI domain; the sequence is FHMHINLELL…SFVNFTTNDH (176 aa). Residues 798-809 show a composition bias toward polar residues; it reads TASNGYSRKQPM. The disordered stretch occupies residues 798-852; it reads TASNGYSRKQPMQQQQQQQQQQQQQKEQKELLHEENNRFRYANVNANNDEFQTTA. Positions 810 to 822 are enriched in low complexity; that stretch reads QQQQQQQQQQQQQ. Over residues 823-835 the composition is skewed to basic and acidic residues; the sequence is KEQKELLHEENNR. Residues 841 to 852 show a composition bias toward polar residues; it reads VNANNDEFQTTA.

It belongs to the eIF-3 subunit C family. In terms of assembly, component of the eukaryotic translation initiation factor 3 (eIF-3) complex.

It localises to the cytoplasm. Its function is as follows. Component of the eukaryotic translation initiation factor 3 (eIF-3) complex, which is involved in protein synthesis of a specialized repertoire of mRNAs and, together with other initiation factors, stimulates binding of mRNA and methionyl-tRNAi to the 40S ribosome. The eIF-3 complex specifically targets and initiates translation of a subset of mRNAs involved in cell proliferation. The polypeptide is Eukaryotic translation initiation factor 3 subunit C (Debaryomyces hansenii (strain ATCC 36239 / CBS 767 / BCRC 21394 / JCM 1990 / NBRC 0083 / IGC 2968) (Yeast)).